The following is a 329-amino-acid chain: MYNLQEITEKARKAIDALQDNSIESLEAIRVEYFGKKGHFTQLMQGLRDVSAEERPAVGAKINEAKQKVQAILNAKKVEWEEIALNERLAQERIDVSLPGRKMELGGLHPVSITINRVVQFFSKLGFTVEIGPEIETDYYNFDALNIPKHHPARADHDTFWFDAERLLRTQTSGVQIRTMEKMCPPIRIMAPGKVYRNDYDQTHTPMFHQIELLYVDKKANFTELKGLLHDFLRAFFEEDLQVRFRPSYFPFTEPSAEVDVMGKNGKWLEVLGCGMVHPNVLRNVGIDPNEYSGFAVGMGVERLTMLRYNVTDLRSFFENDLRFLKQFK.

Residue Glu-254 coordinates Mg(2+).

It belongs to the class-II aminoacyl-tRNA synthetase family. Phe-tRNA synthetase alpha subunit type 1 subfamily. As to quaternary structure, tetramer of two alpha and two beta subunits. Mg(2+) is required as a cofactor.

Its subcellular location is the cytoplasm. It carries out the reaction tRNA(Phe) + L-phenylalanine + ATP = L-phenylalanyl-tRNA(Phe) + AMP + diphosphate + H(+). The chain is Phenylalanine--tRNA ligase alpha subunit from Histophilus somni (strain 129Pt) (Haemophilus somnus).